We begin with the raw amino-acid sequence, 125 residues long: Holo-[acyl-carrier-protein] synthase (125 aa).

2 residues coordinate Mg(2+): Asp8 and Glu57.

This sequence belongs to the P-Pant transferase superfamily. AcpS family. It depends on Mg(2+) as a cofactor.

The protein resides in the cytoplasm. It carries out the reaction apo-[ACP] + CoA = holo-[ACP] + adenosine 3',5'-bisphosphate + H(+). In terms of biological role, transfers the 4'-phosphopantetheine moiety from coenzyme A to a Ser of acyl-carrier-protein. This is Holo-[acyl-carrier-protein] synthase from Blochmanniella pennsylvanica (strain BPEN).